We begin with the raw amino-acid sequence, 422 residues long: Zinc finger protein zfp-2 (422 aa).

The tract at residues 95–119 (AIPCTSSSMQPSTSSNPSSGEHQPV) is disordered. Low complexity predominate over residues 99-113 (TSSSMQPSTSSNPSS). 7 C2H2-type zinc fingers span residues 171–194 (YRCTNCKTYFGNKEVYQRHIQEVH), 200–222 (FRCFNCGMRFANKTSMTHHLKDH), 229–251 (FSCDYCPRIFSKLESKTRHHKMH), 255–278 (STCQTCMRFFTTEDALRHHQSTAH), 300–322 (YSCSYCNLRFHFKKDMLVHERIH), 328–350 (YSCGYCMKSFAQSQALTAHIRTH), and 356–379 (YGCGKCDKRFRDNSCLRKHELAAH).

As to expression, expressed in vulval cells and all somatic gonad structures such as spermatheca, sheath cells, uterine cells and distal tip cells.

The protein resides in the nucleus. Its function is as follows. Probable zinc finger transcription factor that acts as a transcriptional repressor. Acts redundantly with the transcriptional repressor lin-35 to control the development of somatic gonad lineages. May, in addition, suppress sensitivity to RNAi. This Caenorhabditis elegans protein is Zinc finger protein zfp-2.